Here is a 112-residue protein sequence, read N- to C-terminus: MLVTTTERIPGQEYEVLGECFGVTTQSRDIISNFGAGLKNLVGGEIKGYTKMLTTSRQEAIDRLKEEAAAMGADAVVMMRFDSGSIASDMQSVVAYGTAVKFIEKIRVRPLT.

This sequence belongs to the UPF0145 family.

The chain is UPF0145 protein LAF_1635 from Limosilactobacillus fermentum (strain NBRC 3956 / LMG 18251) (Lactobacillus fermentum).